A 475-amino-acid polypeptide reads, in one-letter code: Ribulose bisphosphate carboxylase large chain (475 aa).

The propeptide occupies 1–2 (MS). Position 3 is an N-acetylproline (Pro-3). The residue at position 14 (Lys-14) is an N6,N6,N6-trimethyllysine. The substrate site is built by Asn-123 and Thr-173. Lys-175 serves as the catalytic Proton acceptor. Lys-177 is a binding site for substrate. Mg(2+)-binding residues include Lys-201, Asp-203, and Glu-204. Lys-201 is modified (N6-carboxylysine). His-294 functions as the Proton acceptor in the catalytic mechanism. The substrate site is built by Arg-295, His-327, and Ser-379.

Belongs to the RuBisCO large chain family. Type I subfamily. In terms of assembly, heterohexadecamer of 8 large chains and 8 small chains; disulfide-linked. The disulfide link is formed within the large subunit homodimers. Requires Mg(2+) as cofactor. Post-translationally, the disulfide bond which can form in the large chain dimeric partners within the hexadecamer appears to be associated with oxidative stress and protein turnover.

It localises to the plastid. Its subcellular location is the chloroplast. It carries out the reaction 2 (2R)-3-phosphoglycerate + 2 H(+) = D-ribulose 1,5-bisphosphate + CO2 + H2O. The catalysed reaction is D-ribulose 1,5-bisphosphate + O2 = 2-phosphoglycolate + (2R)-3-phosphoglycerate + 2 H(+). RuBisCO catalyzes two reactions: the carboxylation of D-ribulose 1,5-bisphosphate, the primary event in carbon dioxide fixation, as well as the oxidative fragmentation of the pentose substrate in the photorespiration process. Both reactions occur simultaneously and in competition at the same active site. The chain is Ribulose bisphosphate carboxylase large chain from Larix occidentalis (Western larch).